The sequence spans 586 residues: Putative ABC transporter ATP-binding protein MG187 homolog (586 aa).

The ABC transporter domain maps to Ile13 to Leu464. Gly45–Thr52 provides a ligand contact to ATP.

It belongs to the ABC transporter superfamily.

The chain is Putative ABC transporter ATP-binding protein MG187 homolog from Mycoplasma pneumoniae (strain ATCC 29342 / M129 / Subtype 1) (Mycoplasmoides pneumoniae).